The sequence spans 515 residues: 2-isopropylmalate synthase (515 aa).

The region spanning 5-267 is the Pyruvate carboxyltransferase domain; that stretch reads VIIFDTTLRD…RTGINHEEIH (263 aa). Mn(2+) contacts are provided by Asp14, His202, His204, and Asn238. Positions 392–515 are regulatory domain; the sequence is KLNYLSVQSG…EMKQKKIATV (124 aa).

The protein belongs to the alpha-IPM synthase/homocitrate synthase family. LeuA type 1 subfamily. Homodimer. Mn(2+) is required as a cofactor.

Its subcellular location is the cytoplasm. It catalyses the reaction 3-methyl-2-oxobutanoate + acetyl-CoA + H2O = (2S)-2-isopropylmalate + CoA + H(+). It participates in amino-acid biosynthesis; L-leucine biosynthesis; L-leucine from 3-methyl-2-oxobutanoate: step 1/4. Functionally, catalyzes the condensation of the acetyl group of acetyl-CoA with 3-methyl-2-oxobutanoate (2-ketoisovalerate) to form 3-carboxy-3-hydroxy-4-methylpentanoate (2-isopropylmalate). This Vibrio vulnificus (strain CMCP6) protein is 2-isopropylmalate synthase.